Here is a 96-residue protein sequence, read N- to C-terminus: Small ribosomal subunit protein bS6 (96 aa).

Belongs to the bacterial ribosomal protein bS6 family.

In terms of biological role, binds together with bS18 to 16S ribosomal RNA. This is Small ribosomal subunit protein bS6 from Synechococcus sp. (strain JA-2-3B'a(2-13)) (Cyanobacteria bacterium Yellowstone B-Prime).